The sequence spans 275 residues: Shikimate dehydrogenase (NADP(+)) (275 aa).

Residues 16 to 18 (SKS) and Thr63 each bind shikimate. The active-site Proton acceptor is the Lys67. The shikimate site is built by Asn88 and Asp104. NADP(+)-binding positions include 129–133 (GAGGA), 153–158 (NRTVAR), and Met219. A shikimate-binding site is contributed by Tyr221. NADP(+) is bound at residue Gly243.

Belongs to the shikimate dehydrogenase family. Homodimer.

It catalyses the reaction shikimate + NADP(+) = 3-dehydroshikimate + NADPH + H(+). It functions in the pathway metabolic intermediate biosynthesis; chorismate biosynthesis; chorismate from D-erythrose 4-phosphate and phosphoenolpyruvate: step 4/7. Involved in the biosynthesis of the chorismate, which leads to the biosynthesis of aromatic amino acids. Catalyzes the reversible NADPH linked reduction of 3-dehydroshikimate (DHSA) to yield shikimate (SA). In Marinobacter nauticus (strain ATCC 700491 / DSM 11845 / VT8) (Marinobacter aquaeolei), this protein is Shikimate dehydrogenase (NADP(+)).